The chain runs to 328 residues: 7,8-didemethyl-8-hydroxy-5-deazariboflavin synthase (328 aa).

Residues 1 to 242 form the Radical SAM core domain; sequence MTYSRNIFIP…PDVSIQVPPN (242 aa). [4Fe-4S] cluster is bound by residues Cys-15, Cys-19, and Cys-22.

This sequence belongs to the radical SAM superfamily. CofG family. As to quaternary structure, consists of two subunits, CofG and CofH. The cofactor is [4Fe-4S] cluster.

The catalysed reaction is 5-amino-5-(4-hydroxybenzyl)-6-(D-ribitylimino)-5,6-dihydrouracil + S-adenosyl-L-methionine = 7,8-didemethyl-8-hydroxy-5-deazariboflavin + 5'-deoxyadenosine + L-methionine + NH4(+) + H(+). The protein operates within cofactor biosynthesis; coenzyme F0 biosynthesis. Its function is as follows. Catalyzes the radical-mediated synthesis of 7,8-didemethyl-8-hydroxy-5-deazariboflavin from 5-amino-5-(4-hydroxybenzyl)-6-(D-ribitylimino)-5,6-dihydrouracil. The protein is 7,8-didemethyl-8-hydroxy-5-deazariboflavin synthase of Methanothermobacter thermautotrophicus (strain ATCC 29096 / DSM 1053 / JCM 10044 / NBRC 100330 / Delta H) (Methanobacterium thermoautotrophicum).